The sequence spans 1242 residues: DNA polymerase catalytic subunit (1242 aa).

4 disordered regions span residues 14–38 (GAVA…RPPQ), 644–665 (LQSA…SSSS), 877–898 (EGDS…GGSN), and 1108–1163 (TAPQ…KPPS). Positions 653–665 (GVSPGSGSNSSSS) are enriched in low complexity. Positions 1110–1119 (PQGSSDNGDS) are enriched in polar residues. Residues 1145–1155 (ESNRRGGEPAK) are compositionally biased toward basic and acidic residues.

This sequence belongs to the DNA polymerase type-B family. As to quaternary structure, forms a complex with the ssDNA-binding protein UL57, the DNA polymerase processivity factor UL44, and the alkaline exonuclease UL98. Interacts with the putative helicase-primase complex composed of UL70, UL102 and UL105 proteins; these interactions may coordinate leading and lagging strand DNA synthesis at the replication fork.

The protein resides in the host nucleus. It carries out the reaction DNA(n) + a 2'-deoxyribonucleoside 5'-triphosphate = DNA(n+1) + diphosphate. In terms of biological role, replicates viral genomic DNA in the late phase of lytic infection, producing long concatemeric DNA. The replication complex is composed of six viral proteins: the DNA polymerase, processivity factor, primase, primase-associated factor, helicase, and ssDNA-binding protein. This chain is DNA polymerase catalytic subunit (UL54), found in Homo sapiens (Human).